The sequence spans 1012 residues: F-box DNA helicase 1 (1012 aa).

The interval 1–54 (MHLTADDCEALSRSTEGLSSLTQPLNQRRSRGDVNRGLQPTHRTRTQPGAQGRQ) is disordered. The segment covering 12–27 (SRSTEGLSSLTQPLNQ) has biased composition (polar residues). One can recognise an F-box domain in the interval 185–234 (QGSIEDLPDEVLRSIFAFLPVTDLYQSLSLVCRRWRIIVGDPWFIPWKKL). Residues 427–692 (THEQQRILNH…YYLTQSFRFG (266 aa)) form the UvrD-like helicase ATP-binding domain. 448–455 (AFAGTGKT) is an ATP binding site.

It belongs to the helicase family. UvrD subfamily. As to quaternary structure, part of the SCF (SKP1-CUL1-F-box) E3 ubiquitin-protein ligase complex SCF(FBH1).

Its subcellular location is the nucleus. The protein resides in the chromosome. The enzyme catalyses Couples ATP hydrolysis with the unwinding of duplex DNA by translocating in the 3'-5' direction.. It catalyses the reaction ATP + H2O = ADP + phosphate + H(+). The protein operates within protein modification; protein ubiquitination. 3'-5' DNA helicase and substrate-recognition component of the SCF(FBH1) E3 ubiquitin ligase complex that plays a key role in response to stalled/damaged replication forks. Involved in genome maintenance by acting as an anti-recombinogenic helicase and preventing extensive strand exchange during homologous recombination: promotes RAD51 filament dissolution from stalled forks, thereby inhibiting homologous recombination and preventing excessive recombination. Also promotes cell death and DNA double-strand breakage in response to replication stress: promotes the endonucleolytic DNA cleavage following prolonged replication stress via its helicase activity, possibly to eliminate cells with excessive replication stress. This chain is F-box DNA helicase 1, found in Gallus gallus (Chicken).